The following is a 324-amino-acid chain: Glyoxylate/hydroxypyruvate reductase B (324 aa).

Active-site residues include R237 and E266. Catalysis depends on H285, which acts as the Proton donor.

The protein belongs to the D-isomer specific 2-hydroxyacid dehydrogenase family. GhrB subfamily. In terms of assembly, homodimer.

The protein localises to the cytoplasm. The catalysed reaction is glycolate + NADP(+) = glyoxylate + NADPH + H(+). The enzyme catalyses (R)-glycerate + NAD(+) = 3-hydroxypyruvate + NADH + H(+). It carries out the reaction (R)-glycerate + NADP(+) = 3-hydroxypyruvate + NADPH + H(+). Its function is as follows. Catalyzes the NADPH-dependent reduction of glyoxylate and hydroxypyruvate into glycolate and glycerate, respectively. In Shigella boydii serotype 18 (strain CDC 3083-94 / BS512), this protein is Glyoxylate/hydroxypyruvate reductase B.